Reading from the N-terminus, the 269-residue chain is MSANSEDQSAQLSLHLDNEWSFNFGSETLNASQLDKSQDQTIFENNSILVDKNVYEQLVATCDAMKAQLHQLMEMVDEKTFDDQNQNSEEMKLILKERDELKKKVDQKSKETVHWTKKYYKLKAYGQEILKKRENEIKLLKSEVVDGKKKLNEIVETINHLEDAANKEKIKRKNVESEMRKADKIIKDALREEMEARKQSQKEYLLEKTERMALEEKISENAASARGVIVRSTCPVADHHILNQRIDVLQRQRKILVESINKRDSPIHH.

Residues 52–262 (KNVYEQLVAT…RKILVESINK (211 aa)) are a coiled coil.

This is an uncharacterized protein from Caenorhabditis elegans.